A 310-amino-acid chain; its full sequence is Homoserine kinase (310 aa).

91–101 contributes to the ATP binding site; it reads PIGSGLGSSAC.

This sequence belongs to the GHMP kinase family. Homoserine kinase subfamily.

The protein localises to the cytoplasm. It catalyses the reaction L-homoserine + ATP = O-phospho-L-homoserine + ADP + H(+). It participates in amino-acid biosynthesis; L-threonine biosynthesis; L-threonine from L-aspartate: step 4/5. Functionally, catalyzes the ATP-dependent phosphorylation of L-homoserine to L-homoserine phosphate. The polypeptide is Homoserine kinase (Escherichia coli (strain K12 / MC4100 / BW2952)).